The sequence spans 498 residues: uncharacterized protein (498 aa).

Disordered regions lie at residues 1 to 48, 99 to 134, and 190 to 209; these read MSND…ARPK, NDLH…GNSK, and NSEN…TSSN. Residues 35-44 are compositionally biased toward polar residues; the sequence is ELSTPKQVNQ. Over residues 99-110 the composition is skewed to basic and acidic residues; sequence NDLHPLDNDSTR. The segment covering 111–126 has biased composition (polar residues); the sequence is TSKTLKNSSEVLTASK.

This is an uncharacterized protein from Schizosaccharomyces pombe (strain 972 / ATCC 24843) (Fission yeast).